Here is a 212-residue protein sequence, read N- to C-terminus: ATP phosphoribosyltransferase (212 aa).

The protein belongs to the ATP phosphoribosyltransferase family. Short subfamily. Heteromultimer composed of HisG and HisZ subunits.

It localises to the cytoplasm. It catalyses the reaction 1-(5-phospho-beta-D-ribosyl)-ATP + diphosphate = 5-phospho-alpha-D-ribose 1-diphosphate + ATP. Its pathway is amino-acid biosynthesis; L-histidine biosynthesis; L-histidine from 5-phospho-alpha-D-ribose 1-diphosphate: step 1/9. Catalyzes the condensation of ATP and 5-phosphoribose 1-diphosphate to form N'-(5'-phosphoribosyl)-ATP (PR-ATP). Has a crucial role in the pathway because the rate of histidine biosynthesis seems to be controlled primarily by regulation of HisG enzymatic activity. The sequence is that of ATP phosphoribosyltransferase from Clostridium botulinum (strain ATCC 19397 / Type A).